Consider the following 332-residue polypeptide: 4-hydroxy-3-methylbut-2-enyl diphosphate reductase (332 aa).

C13 serves as a coordination point for [4Fe-4S] cluster. Residues H41 and H75 each contribute to the (2E)-4-hydroxy-3-methylbut-2-enyl diphosphate site. Dimethylallyl diphosphate contacts are provided by H41 and H75. The isopentenyl diphosphate site is built by H41 and H75. C97 contacts [4Fe-4S] cluster. H125 contributes to the (2E)-4-hydroxy-3-methylbut-2-enyl diphosphate binding site. H125 contributes to the dimethylallyl diphosphate binding site. H125 is a binding site for isopentenyl diphosphate. E127 functions as the Proton donor in the catalytic mechanism. T168 is a (2E)-4-hydroxy-3-methylbut-2-enyl diphosphate binding site. C229 serves as a coordination point for [4Fe-4S] cluster. The (2E)-4-hydroxy-3-methylbut-2-enyl diphosphate site is built by S257, S258, N259, and S306. Residues S257, S258, N259, and S306 each contribute to the dimethylallyl diphosphate site. Isopentenyl diphosphate-binding residues include S257, S258, N259, and S306.

The protein belongs to the IspH family. Requires [4Fe-4S] cluster as cofactor.

It carries out the reaction isopentenyl diphosphate + 2 oxidized [2Fe-2S]-[ferredoxin] + H2O = (2E)-4-hydroxy-3-methylbut-2-enyl diphosphate + 2 reduced [2Fe-2S]-[ferredoxin] + 2 H(+). It catalyses the reaction dimethylallyl diphosphate + 2 oxidized [2Fe-2S]-[ferredoxin] + H2O = (2E)-4-hydroxy-3-methylbut-2-enyl diphosphate + 2 reduced [2Fe-2S]-[ferredoxin] + 2 H(+). Its pathway is isoprenoid biosynthesis; dimethylallyl diphosphate biosynthesis; dimethylallyl diphosphate from (2E)-4-hydroxy-3-methylbutenyl diphosphate: step 1/1. It functions in the pathway isoprenoid biosynthesis; isopentenyl diphosphate biosynthesis via DXP pathway; isopentenyl diphosphate from 1-deoxy-D-xylulose 5-phosphate: step 6/6. Catalyzes the conversion of 1-hydroxy-2-methyl-2-(E)-butenyl 4-diphosphate (HMBPP) into a mixture of isopentenyl diphosphate (IPP) and dimethylallyl diphosphate (DMAPP). Acts in the terminal step of the DOXP/MEP pathway for isoprenoid precursor biosynthesis. This Chlorobaculum parvum (strain DSM 263 / NCIMB 8327) (Chlorobium vibrioforme subsp. thiosulfatophilum) protein is 4-hydroxy-3-methylbut-2-enyl diphosphate reductase.